The primary structure comprises 462 residues: Proline--tRNA ligase (462 aa).

Belongs to the class-II aminoacyl-tRNA synthetase family. ProS type 3 subfamily. As to quaternary structure, homodimer.

It is found in the cytoplasm. It catalyses the reaction tRNA(Pro) + L-proline + ATP = L-prolyl-tRNA(Pro) + AMP + diphosphate. In terms of biological role, catalyzes the attachment of proline to tRNA(Pro) in a two-step reaction: proline is first activated by ATP to form Pro-AMP and then transferred to the acceptor end of tRNA(Pro). The polypeptide is Proline--tRNA ligase (Thermoplasma volcanium (strain ATCC 51530 / DSM 4299 / JCM 9571 / NBRC 15438 / GSS1)).